The primary structure comprises 265 residues: Small ribosomal subunit protein uS2 (265 aa).

The segment at 231–265 (VEEEYEDYEGSEEDYDYDETEYADSVIPEDGEEAE) is disordered.

Belongs to the universal ribosomal protein uS2 family.

The sequence is that of Small ribosomal subunit protein uS2 from Nostoc sp. (strain PCC 7120 / SAG 25.82 / UTEX 2576).